The primary structure comprises 211 residues: MQLKNPILGLCQQATFMLSAAKVDQCPDDEGFEVAFAGRSNAGKSSALNTLTHASLARTSKTPGRTQLLNFFGLDEDRRLVDLPGYGYAKVPIPLKLHWQRHLEAYLGSRESLKGLILMMDIRHPMTDFDLLMLDWAIASNMPMHILLTKADKLTYGAAKNTLLKVQTEIRKGWGDAVSIQLFSAPKRMGLEEAYTVLADWMELEDKAPAE.

Residues 30 to 204 (EGFEVAFAGR…YTVLADWMEL (175 aa)) form the EngB-type G domain. GTP contacts are provided by residues 38–45 (GRSNAGKS), 64–68 (GRTQL), 82–85 (DLPG), 149–152 (TKAD), and 182–185 (LFSA). Ser45 and Thr66 together coordinate Mg(2+).

The protein belongs to the TRAFAC class TrmE-Era-EngA-EngB-Septin-like GTPase superfamily. EngB GTPase family. It depends on Mg(2+) as a cofactor.

Functionally, necessary for normal cell division and for the maintenance of normal septation. The sequence is that of Probable GTP-binding protein EngB from Pseudomonas savastanoi pv. phaseolicola (strain 1448A / Race 6) (Pseudomonas syringae pv. phaseolicola (strain 1448A / Race 6)).